The chain runs to 84 residues: Mu-conotoxin-like Cal 12.2b (84 aa).

The first 19 residues, 1–19 (MKLTCVLVVLLLVLPFGDL), serve as a signal peptide directing secretion. A propeptide spanning residues 20–42 (ITTSNTEDNKRGATPWQNSLKAR) is cleaved from the precursor. 4 disulfides stabilise this stretch: C45-C57, C52-C65, C59-C70, and C64-C76. W72 is modified (6'-bromotryptophan). P77 carries the post-translational modification 4-hydroxyproline. W81 carries the 6'-bromotryptophan modification.

It belongs to the conotoxin O1 superfamily. Expressed by the venom duct.

It localises to the secreted. Mu-conotoxins block voltage-gated sodium channels. This toxin reversibly blocks voltage-gated sodium channel in cephalopods, with no alteration in the voltage dependence of sodium conductance or on the kinetics of inactivation. This Californiconus californicus (California cone) protein is Mu-conotoxin-like Cal 12.2b.